A 427-amino-acid chain; its full sequence is Putative zinc protease AlbF (427 aa).

A Zn(2+)-binding site is contributed by H66. E69 functions as the Proton acceptor in the catalytic mechanism. Zn(2+) is bound by residues H70 and E142.

This sequence belongs to the peptidase M16 family. Zn(2+) serves as cofactor.

Functionally, required for production of the bacteriocin subtilosin. Could catalyze some step in the processing of presubtilosin. In Bacillus subtilis, this protein is Putative zinc protease AlbF (albF).